Consider the following 299-residue polypeptide: Tyrosine recombinase XerD (299 aa).

In terms of domain architecture, Core-binding (CB) spans 2–89; the sequence is ETVNNNLQQF…AIRSFHQFLL (88 aa). One can recognise a Tyr recombinase domain in the interval 110-293; the sequence is RLPKALTIEE…TKTRMRDVYA (184 aa). Residues Arg-150, Lys-174, His-245, Arg-248, and His-271 contribute to the active site. The O-(3'-phospho-DNA)-tyrosine intermediate role is filled by Tyr-280.

This sequence belongs to the 'phage' integrase family. XerD subfamily. Forms a cyclic heterotetrameric complex composed of two molecules of XerC and two molecules of XerD.

The protein resides in the cytoplasm. Functionally, site-specific tyrosine recombinase, which acts by catalyzing the cutting and rejoining of the recombining DNA molecules. The XerC-XerD complex is essential to convert dimers of the bacterial chromosome into monomers to permit their segregation at cell division. It also contributes to the segregational stability of plasmids. This chain is Tyrosine recombinase XerD, found in Halalkalibacterium halodurans (strain ATCC BAA-125 / DSM 18197 / FERM 7344 / JCM 9153 / C-125) (Bacillus halodurans).